A 189-amino-acid chain; its full sequence is Large ribosomal subunit protein bL17 (189 aa).

It belongs to the bacterial ribosomal protein bL17 family. Part of the 50S ribosomal subunit. Contacts protein L32.

The polypeptide is Large ribosomal subunit protein bL17 (Rhodococcus jostii (strain RHA1)).